An 87-amino-acid chain; its full sequence is Small ribosomal subunit protein uS17 (87 aa).

This sequence belongs to the universal ribosomal protein uS17 family. As to quaternary structure, part of the 30S ribosomal subunit.

In terms of biological role, one of the primary rRNA binding proteins, it binds specifically to the 5'-end of 16S ribosomal RNA. In Thiobacillus denitrificans (strain ATCC 25259 / T1), this protein is Small ribosomal subunit protein uS17.